The sequence spans 253 residues: RAD51-associated protein 1 (253 aa).

An interaction with DNA region spans residues 32–51; sequence APLTKKSRTQPKEPKKENKK. Disordered stretches follow at residues 33–74, 141–169, and 184–244; these read PLTK…TSLD, DREHVTDSEPVTIPDEESEEDSDYREGND, and KKIK…WVPP. Residues 154 to 169 show a composition bias toward acidic residues; that stretch reads PDEESEEDSDYREGND. Residues 184 to 195 are compositionally biased toward basic residues; that stretch reads KKIKRQTRKEKK. Positions 190-241 are interaction with DNA; sequence TRKEKKTPKSENNTTVMELKSEQTQKMMSTSSEPVGRPLYTSSPVTNKKPKW. The segment covering 199–222 has biased composition (polar residues); it reads SENNTTVMELKSEQTQKMMSTSSE.

Monomer.

The protein localises to the chromosome. It is found in the nucleus. Functionally, structure-specific DNA-binding protein involved in DNA repair by promoting RAD51-mediated homologous recombination. Acts by stimulating D-Loop formation by RAD51: specifically enhances joint molecule formation through its structure-specific DNA interaction and its interaction with RAD51. Binds single-stranded DNA (ssDNA), double-stranded DNA (dsDNA) and secondary DNA structures, such as D-loop structures: has a strong preference for branched-DNA structures that are obligatory intermediates during joint molecule formation. Involved in mitotic recombination-dependent replication fork processing. Also involved in meiosis by promoting DMC1-mediated homologous meiotic recombination. This is RAD51-associated protein 1 from Gallus gallus (Chicken).